The following is a 392-amino-acid chain: MTLLGTALRPAATRVMLLGSGELGKEVAIECQRLGVEVIAVDRYADAPAMHVAHRSHVINMLDGDALRRVVELEKPHYIVPEIEAIATDMLIQLEEEGLNVVPCARATKLTMNREGIRRLAAEELQLPTSTYRFADSESLFREAVADIGYPCIVKPVMSSSGKGQTFIRSAEQLAQAWKYAQQGGRAGAGRVIVEGVVKFDFEITLLTVSAVDGVHFCAPVGHRQEDGDYRESWQPQQMSPLALERAQEIARKVVLALGGYGLFGVELFVCGDEVIFSEVSPRPHDTGMVTLISQDLSEFALHVRAFLGLPVGGIRQYGPAASAVILPQLTSQNVTFDNVQNAVGADLQIRLFGKPEIDGSRRLGVALATAESVVDAIERAKHAAGQVKVQG.

N(1)-(5-phospho-beta-D-ribosyl)glycinamide is bound by residues 22-23 (EL) and Glu82. Residues Arg114, Lys155, 160–165 (SSGKGQ), 195–198 (EGVV), and Glu203 each bind ATP. Residues 119 to 308 (RLAAEELQLP…EFALHVRAFL (190 aa)) enclose the ATP-grasp domain. Residues Glu267 and Glu279 each contribute to the Mg(2+) site. N(1)-(5-phospho-beta-D-ribosyl)glycinamide-binding positions include Asp286, Lys355, and 362-363 (RR).

It belongs to the PurK/PurT family. Homodimer.

The catalysed reaction is N(1)-(5-phospho-beta-D-ribosyl)glycinamide + formate + ATP = N(2)-formyl-N(1)-(5-phospho-beta-D-ribosyl)glycinamide + ADP + phosphate + H(+). It functions in the pathway purine metabolism; IMP biosynthesis via de novo pathway; N(2)-formyl-N(1)-(5-phospho-D-ribosyl)glycinamide from N(1)-(5-phospho-D-ribosyl)glycinamide (formate route): step 1/1. Its function is as follows. Involved in the de novo purine biosynthesis. Catalyzes the transfer of formate to 5-phospho-ribosyl-glycinamide (GAR), producing 5-phospho-ribosyl-N-formylglycinamide (FGAR). Formate is provided by PurU via hydrolysis of 10-formyl-tetrahydrofolate. The protein is Formate-dependent phosphoribosylglycinamide formyltransferase of Shigella sonnei (strain Ss046).